The chain runs to 425 residues: MLELLYTALLYLIQPLIWIRLWVRGRKAPAYRKRWGERYGFYRHPLKPGGIMLHSVSVGETLAAIPLVRALRHRYPDLPITVTTMTPTGSERVQSAFGKDVQHVYLPYDLPDALNRFLNKVDPKLVLIMETELWPNLIAALHKRKIPLVIANARLSARSAAGYAKLGKFVRRLLRRITLIAAQNEEDGARFVALGAKNNQVTVTGSLKFDISVTPQLAAKAVTLRRQWAPHRPVWIATSTHEGEESVVIAAHQALLQQFPNLLLILVPRHPERFPDAINLVRQAGLSYITRSSGEVPSTSTQVVVGDTMGELMLLYGIADLAFVGGSLVERGGHNPLEAAAHAIPVLMGPHTFNFKDICARLEQASGLITVTDATTLAKEVSSLLTDADYRSFYGRHAVEVLYQNQGALQRLLQLLEPYLPPKTH.

A helical; Signal-anchor transmembrane segment spans residues 3-23 (ELLYTALLYLIQPLIWIRLWV). Glu60 functions as the Proton acceptor in the catalytic mechanism. CMP is bound by residues 268–269 (PR), 309–311 (MGE), and 335–338 (NPLE).

Belongs to the glycosyltransferase group 1 family. Glycosyltransferase 30 subfamily.

Its subcellular location is the cell inner membrane. The enzyme catalyses lipid IVA (E. coli) + CMP-3-deoxy-beta-D-manno-octulosonate = alpha-Kdo-(2-&gt;6)-lipid IVA (E. coli) + CMP + H(+). The catalysed reaction is alpha-Kdo-(2-&gt;6)-lipid IVA (E. coli) + CMP-3-deoxy-beta-D-manno-octulosonate = alpha-Kdo-(2-&gt;4)-alpha-Kdo-(2-&gt;6)-lipid IVA (E. coli) + CMP + H(+). It participates in glycolipid biosynthesis; KDO(2)-lipid A biosynthesis; KDO(2)-lipid A from CMP-3-deoxy-D-manno-octulosonate and lipid IV(A): step 1/4. It functions in the pathway glycolipid biosynthesis; KDO(2)-lipid A biosynthesis; KDO(2)-lipid A from CMP-3-deoxy-D-manno-octulosonate and lipid IV(A): step 2/4. The protein operates within bacterial outer membrane biogenesis; LPS core biosynthesis. In terms of biological role, involved in lipopolysaccharide (LPS) biosynthesis. Catalyzes the transfer of two 3-deoxy-D-manno-octulosonate (Kdo) residues from CMP-Kdo to lipid IV(A), the tetraacyldisaccharide-1,4'-bisphosphate precursor of lipid A. The sequence is that of 3-deoxy-D-manno-octulosonic acid transferase (waaA) from Escherichia coli O157:H7.